A 266-amino-acid polypeptide reads, in one-letter code: Large ribosomal subunit protein uL2m (266 aa).

Belongs to the universal ribosomal protein uL2 family.

The protein localises to the mitochondrion. The polypeptide is Large ribosomal subunit protein uL2m (mrpl2) (Dictyostelium discoideum (Social amoeba)).